A 491-amino-acid polypeptide reads, in one-letter code: Mitochondrial distribution and morphology protein 12 (491 aa).

The SMP-LTD domain maps to 1–491 (MSIDLNWEAA…VFPSYWTFLV (491 aa)). Residues 72 to 82 (ESDSSEDEDGE) are compositionally biased toward acidic residues. Disordered stretches follow at residues 72–123 (ESDS…NHHD), 201–313 (GWPD…MRER), and 389–434 (GDED…QPRR). 2 stretches are compositionally biased toward basic and acidic residues: residues 83–123 (GHDA…NHHD) and 213–229 (MTDH…HNKN). Residues 230–249 (ETGSPSRPSTAHTNPTQLSH) show a composition bias toward polar residues. Positions 252-262 (SAASSSNNTSN) are enriched in low complexity. Residues 270–279 (DHTSSTTATT) are compositionally biased toward polar residues. The span at 400–421 (STANTTTAASGSSTDNNNNNNE) shows a compositional bias: low complexity.

This sequence belongs to the MDM12 family. In terms of assembly, component of the ER-mitochondria encounter structure (ERMES) or MDM complex, composed of mmm1, mdm10, mdm12 and mdm34. A mmm1 homodimer associates with one molecule of mdm12 on each side in a pairwise head-to-tail manner, and the SMP-LTD domains of mmm1 and mdm12 generate a continuous hydrophobic tunnel for phospholipid trafficking.

Its subcellular location is the mitochondrion outer membrane. It localises to the endoplasmic reticulum membrane. Its function is as follows. Component of the ERMES/MDM complex, which serves as a molecular tether to connect the endoplasmic reticulum (ER) and mitochondria. Components of this complex are involved in the control of mitochondrial shape and protein biogenesis, and function in nonvesicular lipid trafficking between the ER and mitochondria. Mdm12 is required for the interaction of the ER-resident membrane protein mmm1 and the outer mitochondrial membrane-resident beta-barrel protein mdm10. The mdm12-mmm1 subcomplex functions in the major beta-barrel assembly pathway that is responsible for biogenesis of all mitochondrial outer membrane beta-barrel proteins, and acts in a late step after the SAM complex. The mdm10-mdm12-mmm1 subcomplex further acts in the TOM40-specific pathway after the action of the mdm12-mmm1 complex. Essential for establishing and maintaining the structure of mitochondria and maintenance of mtDNA nucleoids. This chain is Mitochondrial distribution and morphology protein 12, found in Talaromyces stipitatus (strain ATCC 10500 / CBS 375.48 / QM 6759 / NRRL 1006) (Penicillium stipitatum).